The primary structure comprises 187 residues: MTTMKRSADPEAEEDPDPSLGKFIEQVVSGPTQKGFPASGAFATPRARRSRGPKRFLGKRNYRRARARKPGKRDRAHSSKVRSSDGSTRPSARYGMRFRSPTLPLCSRPRTWEFLLDLGYDSMSLKSARVASERPCDPGRANHVWEPGGLSPEQAQWDWVGKVYSRDRVLKLMGELHELVYRESGRR.

Residues 1 to 95 are disordered; that stretch reads MTTMKRSADP…GSTRPSARYG (95 aa). Over residues 46–80 the composition is skewed to basic residues; the sequence is RARRSRGPKRFLGKRNYRRARARKPGKRDRAHSSK.

Its subcellular location is the mitochondrion. This is an uncharacterized protein from Arabidopsis thaliana (Mouse-ear cress).